The chain runs to 217 residues: Thiamine-phosphate synthase (217 aa).

Residues 39-43 (QLRRK) and N71 contribute to the 4-amino-2-methyl-5-(diphosphooxymethyl)pyrimidine site. 2 residues coordinate Mg(2+): D72 and D91. S110 contacts 4-amino-2-methyl-5-(diphosphooxymethyl)pyrimidine. 137 to 139 (SPT) lines the 2-[(2R,5Z)-2-carboxy-4-methylthiazol-5(2H)-ylidene]ethyl phosphate pocket. K140 serves as a coordination point for 4-amino-2-methyl-5-(diphosphooxymethyl)pyrimidine. Residues G173 and 193 to 194 (IS) each bind 2-[(2R,5Z)-2-carboxy-4-methylthiazol-5(2H)-ylidene]ethyl phosphate.

This sequence belongs to the thiamine-phosphate synthase family. Mg(2+) serves as cofactor.

The catalysed reaction is 2-[(2R,5Z)-2-carboxy-4-methylthiazol-5(2H)-ylidene]ethyl phosphate + 4-amino-2-methyl-5-(diphosphooxymethyl)pyrimidine + 2 H(+) = thiamine phosphate + CO2 + diphosphate. It carries out the reaction 2-(2-carboxy-4-methylthiazol-5-yl)ethyl phosphate + 4-amino-2-methyl-5-(diphosphooxymethyl)pyrimidine + 2 H(+) = thiamine phosphate + CO2 + diphosphate. The enzyme catalyses 4-methyl-5-(2-phosphooxyethyl)-thiazole + 4-amino-2-methyl-5-(diphosphooxymethyl)pyrimidine + H(+) = thiamine phosphate + diphosphate. It functions in the pathway cofactor biosynthesis; thiamine diphosphate biosynthesis; thiamine phosphate from 4-amino-2-methyl-5-diphosphomethylpyrimidine and 4-methyl-5-(2-phosphoethyl)-thiazole: step 1/1. Functionally, condenses 4-methyl-5-(beta-hydroxyethyl)thiazole monophosphate (THZ-P) and 2-methyl-4-amino-5-hydroxymethyl pyrimidine pyrophosphate (HMP-PP) to form thiamine monophosphate (TMP). This Bordetella bronchiseptica (strain ATCC BAA-588 / NCTC 13252 / RB50) (Alcaligenes bronchisepticus) protein is Thiamine-phosphate synthase.